A 296-amino-acid polypeptide reads, in one-letter code: NADH-cytochrome b5 reductase 2-A (296 aa).

The helical transmembrane segment at 15–35 (FVIGAPTIALCSYYYSSGAFL) threads the bilayer. In terms of domain architecture, FAD-binding FR-type spans 47–151 (NNWIDLPISR…KGPIPKWKWV (105 aa)). 154 to 189 (SFESITLIGGGTGITPLYQLIHAITKNPNDKTKIRL) serves as a coordination point for FAD.

Belongs to the flavoprotein pyridine nucleotide cytochrome reductase family. FAD serves as cofactor.

It localises to the mitochondrion outer membrane. The enzyme catalyses 2 Fe(III)-[cytochrome b5] + NADH = 2 Fe(II)-[cytochrome b5] + NAD(+) + H(+). May mediate the reduction of outer membrane cytochrome b5. This is NADH-cytochrome b5 reductase 2-A (MCR1A) from Vanderwaltozyma polyspora (strain ATCC 22028 / DSM 70294 / BCRC 21397 / CBS 2163 / NBRC 10782 / NRRL Y-8283 / UCD 57-17) (Kluyveromyces polysporus).